The primary structure comprises 469 residues: MQQSESSSAQFDVAVIGSGPGGYEAALHAARHGMKVCLVEKASLGGVCVNWGCIPTKALLRSAEVYDLAKNPSEFGVNVSELSFDLAQAVKRSRKVSLKSSKGVEFMLKKAKVEVWRGEAVLTGSKGVKVTAEDGSERSLEAANIIVATGAQPRVIPGLEPDGKKIITSREALILKDVPESMIVVGGGAIGVEMAWFYAKAGAKVTIVELMPRLLPAEEAEVSEALKRSFEKVDITVQCGAKLGNVAISEFGVNADLLAEGKEPQKIEASCMLVAVGVTGVIDGLGLDAAGIETERGFIRTDELCRTSASGIYAIGDVRGGMLLAHKASAEAAIAVEAIAGKLPEPLSEPLIPRCVYAQPSVASVGLTEEAAIAAGYKVLVGRSQFAASGKANAYGQLEGFVKLVFNAETGKMLGGHLIGHDAVELIGELGLACRYGVTAEGLVGTVHAHPTLSETVREAAFAALQSKG.

Residues 40–48, K57, and A120 each bind FAD; that span reads EKASLGGVC. C48 and C53 are oxidised to a cystine. NAD(+) contacts are provided by residues 186–190, E209, and 275–278; these read GGGAI and AVGV. FAD-binding residues include D317 and A325. The Proton acceptor role is filled by H450.

It belongs to the class-I pyridine nucleotide-disulfide oxidoreductase family. In terms of assembly, homodimer. It depends on FAD as a cofactor.

It localises to the cytoplasm. It carries out the reaction N(6)-[(R)-dihydrolipoyl]-L-lysyl-[protein] + NAD(+) = N(6)-[(R)-lipoyl]-L-lysyl-[protein] + NADH + H(+). Lipoamide dehydrogenase is a component of the alpha-ketoacid dehydrogenase complexes. The protein is Dihydrolipoyl dehydrogenase (lpd) of Chlorobaculum parvum (strain DSM 263 / NCIMB 8327) (Chlorobium vibrioforme subsp. thiosulfatophilum).